We begin with the raw amino-acid sequence, 375 residues long: Putative fimbrium tip subunit Fim1C (375 aa).

The first 16 residues, 1–16 (MKLLANIFLSGLAILA), serve as a signal peptide directing secretion. Cysteine 17 carries N-palmitoyl cysteine lipidation. Cysteine 17 carries S-diacylglycerol cysteine lipidation. The propeptide occupies 17 to 47 (CVSCSKDEDPVLPLEGAKLSVAVKASGTATK).

It belongs to the bacteroidetes fimbrillin superfamily. FimA/Mfa1 family. May be part of the fimbrial tip.

It localises to the fimbrium. Its subcellular location is the cell outer membrane. Probably a component of the fimbrium tip. Fimbriae are filamentous appendages on the cell surface that mediate cell adhesion and biofilm formation. The protein is Putative fimbrium tip subunit Fim1C of Parabacteroides distasonis (strain ATCC 8503 / DSM 20701 / CIP 104284 / JCM 5825 / NCTC 11152).